The primary structure comprises 842 residues: MSRPLSDQDKRKQISVRGLAGVENVSELKKNFNRHLHFTLVKDRNVATPRDYYFALAHTVRDHLVGRWIRTQQHYYEKDPKRIYYLSLEFYMGRTLQNTMVNLALENACDEATYQLGLDMEELEEIEEDAGLGNGGLGRLAACFLDSMATLGLAAYGYGIRYEFGIFNQKICGGWQMEEADDWLRYGNPWEKARPEFTLPVHFYGRVEHTSQGAKWVDTQVVLAMPYDTPVPGYRNNVVNTMRLWSAKAPNDFNLKDFNVGGYIQAVLDRNLAENISRVLYPNDNFFEGKELRLKQEYFVVAATLQDIIRRFKSSKFGSRDPVRTNFDAFPDKVAIQLNDTHPSLAIPELMRILVDLERLDWDKAWDVTVKTCAYTNHTVLPEALERWPVHLMETLLPRHLQIIYEINQRFLNRVAAAFPGDVDRLRRMSLVEEGAVKRINMAHLCIAGSHAVNGVARIHSEILKKTIFKDFYELEPHKFQNKTNGITPRRWLVLCNPGLAEVIAERIGEDYISDLDQLRKLLSYVDDEAFIRDVAKVKQENKLKFSAYLEREYKVHINPNSLFDVQVKRIHEYKRQLLNCLHIITLYNRIKREPNRFMVPRTIMIGGKAAPGYHMAKMIIKLITAIGDVVNHDPAVGDRLRVIFLENYRVSLAEKVIPAADLSEQISTAGTEASGTGNMKFMLNGALTIGTMDGANVEMAEEAGEENFFIFGMRVEDVERLDQRGYNAQEYYDRIPELRQIIEQLSSGFFSPKQPDLFKDIVNMLMHHDRFKVFADYEEYIKCQDKVSELYKNPREWTRMVIRNIATSGKFSSDRTIAQYAREIWGVEPSRQRLPAPDEKI.

Position 2 is an N-acetylserine (serine 2). Serine 15 carries the post-translational modification Phosphoserine; by PHK; in form phosphorylase A. 2 residues coordinate AMP: aspartate 43 and tyrosine 76. Residues tyrosine 204 and tyrosine 227 each carry the phosphotyrosine modification. 310 to 319 contacts AMP; the sequence is RRFKSSKFGS. Serine 430 carries the post-translational modification Phosphoserine. Phosphotyrosine is present on tyrosine 473. Serine 514 is modified (phosphoserine). Lysine 681 carries the N6-(pyridoxal phosphate)lysine modification. Serine 747 and serine 748 each carry phosphoserine.

Belongs to the glycogen phosphorylase family. Homodimer. Homotetramer; to form the enzymatically active phosphorylase A. Requires pyridoxal 5'-phosphate as cofactor. In terms of processing, phosphorylation of Ser-15 converts phosphorylase B (unphosphorylated) to phosphorylase A.

The catalysed reaction is [(1-&gt;4)-alpha-D-glucosyl](n) + phosphate = [(1-&gt;4)-alpha-D-glucosyl](n-1) + alpha-D-glucose 1-phosphate. Allosterically regulated through the non-covalent binding of metabolites, being activated by AMP and inhibited by ATP, ADP, and glucose-6-phosphate. The activity is also controlled by post-translational modifications including phosphorylation. Functionally, allosteric enzyme that catalyzes the rate-limiting step in glycogen catabolism, the phosphorolytic cleavage of glycogen to produce glucose-1-phosphate, and plays a central role in maintaining cellular and organismal glucose homeostasis. The sequence is that of Glycogen phosphorylase, muscle form from Mus musculus (Mouse).